Consider the following 186-residue polypeptide: Ribosome-recycling factor (186 aa).

This sequence belongs to the RRF family.

Its subcellular location is the cytoplasm. Its function is as follows. Responsible for the release of ribosomes from messenger RNA at the termination of protein biosynthesis. May increase the efficiency of translation by recycling ribosomes from one round of translation to another. The protein is Ribosome-recycling factor of Burkholderia cenocepacia (strain HI2424).